Consider the following 899-residue polypeptide: Toll-like receptor 4 (899 aa).

The first 46 residues, 1–46 (MCPLQIHVLHLIQGNQKNRKGKYVNMTRQLWYILPLLFLLCHCVTS), serve as a signal peptide directing secretion. N-linked (GlcNAc...) asparagine glycosylation is found at asparagine 25, asparagine 75, asparagine 83, and asparagine 93. Topologically, residues 47 to 702 (ERRCYFSKIS…LERNCRSYTA (656 aa)) are extracellular. LRR repeat units follow at residues 83–103 (NESVVQIDLSNNSINVFPDLP), 104–126 (RSLLVLDISRNPLKQFQKNAFAR), 128–150 (QNLTTLSIVNNTYGLQPSNLTAG), 155–179 (LTRLTYLDLRGSWNGTAYPEEVLSD), 181–202 (VSLNALRINGKQKGFGVLMRKI), 203–229 (HALKRLDISGSEGDCKIDCLHAGYFQN), and 230–253 (VHGIQELNVSNCHLTNILEGTFSY). Residues asparagine 129, asparagine 137, asparagine 146, and asparagine 168 are each glycosylated (N-linked (GlcNAc...) asparagine). N-linked (GlcNAc...) asparagine glycosylation is found at asparagine 237, asparagine 256, asparagine 275, and asparagine 313. LRR repeat units follow at residues 257-282 (LTHLDISYNEELSFNILRNISKDLKN), 313-336 (NTSLRELHANSNRLETIQSGVLMY), 338-360 (PKTLQHASVSDNKLTMGMYALET), and 363-386 (LVNLKTYDMSLQFKSHDPRDIFSN). 3 N-linked (GlcNAc...) asparagine glycosylation sites follow: asparagine 388, asparagine 432, and asparagine 463. LRR repeat units lie at residues 468–493 (HYPLLKYRIGNNKIKEIYAQDNVFYD), 501–524 (LEGLEILDLSNNFCTNLSTFFFDY), 526–549 (TGLKSVKLNHNILGFSLAKDEKGE), 554–577 (LLKLKHLEIKYNRIQVLPKKILRN), 579–601 (ISLETLDLADNWLRKFKVDLKHI), 602–624 (KGLRHIDLSNNQISELPPGVMRE), and 631–654 (SSNLTVNLTGNSLLCNCENEHFLR). The N-linked (GlcNAc...) asparagine glycan is linked to asparagine 516. Residues asparagine 633, asparagine 637, and asparagine 668 are each glycosylated (N-linked (GlcNAc...) asparagine). A helical transmembrane segment spans residues 703-723 (VIVLFSCVFVILLTVIVCGVV). Topologically, residues 724–899 (YRYRWKLRYL…WRKLRDPISM (176 aa)) are cytoplasmic. The TIR domain maps to 756-897 (YEFDAFISYA…IFWRKLRDPI (142 aa)).

This sequence belongs to the Toll-like receptor family. Expressed in all tissues tested. The highest expression is in the hepatopancreas, with moderate expression in the gills, and low expression in the gonads, adductor muscle, hemocytes, and mantle.

The protein localises to the cell membrane. Its function is as follows. May be involved in the innate immune response. The sequence is that of Toll-like receptor 4 from Pinctada imbricata (Atlantic pearl-oyster).